Consider the following 463-residue polypeptide: Cysteine--tRNA ligase (463 aa).

Position 29 (Cys-29) interacts with Zn(2+). Residues 31–41 (PTVYDFAHIGN) carry the 'HIGH' region motif. Residues Cys-227, His-252, and Glu-256 each contribute to the Zn(2+) site. Residues 285-289 (KMSKS) carry the 'KMSKS' region motif. Lys-288 contacts ATP.

The protein belongs to the class-I aminoacyl-tRNA synthetase family. In terms of assembly, monomer. It depends on Zn(2+) as a cofactor.

The protein localises to the cytoplasm. The enzyme catalyses tRNA(Cys) + L-cysteine + ATP = L-cysteinyl-tRNA(Cys) + AMP + diphosphate. This Rhodopseudomonas palustris (strain BisB5) protein is Cysteine--tRNA ligase.